The chain runs to 323 residues: Sphingolipid delta(4)-desaturase DES1 (323 aa).

A lipid anchor (N-myristoyl glycine) is attached at glycine 2. The next 2 membrane-spanning stretches (helical) occupy residues 41 to 61 (PNLI…FYIV) and 68 to 88 (WVIF…TLAI). A Histidine box-1 motif is present at residues 89 to 93 (HEIAH). Residues 102–122 (AMWNRWFGMFANLPIGIPYSI) form a helical membrane-spanning segment. Positions 128 to 132 (HMDHH) match the Histidine box-2 motif. Helical transmembrane passes span 152–172 (FFCT…FYAF), 184–204 (YLEV…YYFL), and 209–229 (LVYM…SGHF). The Histidine box-3 motif lies at 259–263 (HNEHH). Position 307 is a phosphoserine (serine 307).

It belongs to the fatty acid desaturase type 1 family. DEGS subfamily. Interacts with RLBP1; the interaction increases synthesis of chromophore-precursors by DEGS1. Myristoylation can target the enzyme to the mitochondria leading to an increase in ceramide levels. In terms of tissue distribution, ubiquitous.

The protein localises to the mitochondrion membrane. The protein resides in the endoplasmic reticulum membrane. It catalyses the reaction an N-acylsphinganine + 2 Fe(II)-[cytochrome b5] + O2 + 2 H(+) = an N-acylsphing-4-enine + 2 Fe(III)-[cytochrome b5] + 2 H2O. The catalysed reaction is all-trans-retinol = 11-cis-retinol. The enzyme catalyses all-trans-retinol = 9-cis-retinol. It carries out the reaction all-trans-retinol = 13-cis-retinol. It catalyses the reaction 11-cis-retinol = 13-cis-retinol. The catalysed reaction is 11-cis-retinol = 9-cis-retinol. Functionally, has sphingolipid-delta-4-desaturase activity. Converts D-erythro-sphinganine to D-erythro-sphingosine (E-sphing-4-enine). Catalyzes the equilibrium isomerization of retinols. The protein is Sphingolipid delta(4)-desaturase DES1 of Homo sapiens (Human).